Consider the following 309-residue polypeptide: 4-hydroxy-3-methylbut-2-enyl diphosphate reductase (309 aa).

Cys12 contacts [4Fe-4S] cluster. 2 residues coordinate (2E)-4-hydroxy-3-methylbut-2-enyl diphosphate: His41 and His74. Residues His41 and His74 each contribute to the dimethylallyl diphosphate site. Residues His41 and His74 each contribute to the isopentenyl diphosphate site. Position 96 (Cys96) interacts with [4Fe-4S] cluster. His124 lines the (2E)-4-hydroxy-3-methylbut-2-enyl diphosphate pocket. His124 contributes to the dimethylallyl diphosphate binding site. His124 is an isopentenyl diphosphate binding site. Glu126 (proton donor) is an active-site residue. Position 167 (Thr167) interacts with (2E)-4-hydroxy-3-methylbut-2-enyl diphosphate. Cys197 serves as a coordination point for [4Fe-4S] cluster. Positions 225, 226, 227, and 269 each coordinate (2E)-4-hydroxy-3-methylbut-2-enyl diphosphate. Residues Ser225, Ser226, Asn227, and Ser269 each contribute to the dimethylallyl diphosphate site. Ser225, Ser226, Asn227, and Ser269 together coordinate isopentenyl diphosphate.

It belongs to the IspH family. [4Fe-4S] cluster serves as cofactor.

It carries out the reaction isopentenyl diphosphate + 2 oxidized [2Fe-2S]-[ferredoxin] + H2O = (2E)-4-hydroxy-3-methylbut-2-enyl diphosphate + 2 reduced [2Fe-2S]-[ferredoxin] + 2 H(+). The catalysed reaction is dimethylallyl diphosphate + 2 oxidized [2Fe-2S]-[ferredoxin] + H2O = (2E)-4-hydroxy-3-methylbut-2-enyl diphosphate + 2 reduced [2Fe-2S]-[ferredoxin] + 2 H(+). It functions in the pathway isoprenoid biosynthesis; dimethylallyl diphosphate biosynthesis; dimethylallyl diphosphate from (2E)-4-hydroxy-3-methylbutenyl diphosphate: step 1/1. The protein operates within isoprenoid biosynthesis; isopentenyl diphosphate biosynthesis via DXP pathway; isopentenyl diphosphate from 1-deoxy-D-xylulose 5-phosphate: step 6/6. In terms of biological role, catalyzes the conversion of 1-hydroxy-2-methyl-2-(E)-butenyl 4-diphosphate (HMBPP) into a mixture of isopentenyl diphosphate (IPP) and dimethylallyl diphosphate (DMAPP). Acts in the terminal step of the DOXP/MEP pathway for isoprenoid precursor biosynthesis. The protein is 4-hydroxy-3-methylbut-2-enyl diphosphate reductase of Colwellia psychrerythraea (strain 34H / ATCC BAA-681) (Vibrio psychroerythus).